Reading from the N-terminus, the 373-residue chain is Cobalt-precorrin-5B C(1)-methyltransferase (373 aa).

Belongs to the CbiD family.

It catalyses the reaction Co-precorrin-5B + S-adenosyl-L-methionine = Co-precorrin-6A + S-adenosyl-L-homocysteine. It functions in the pathway cofactor biosynthesis; adenosylcobalamin biosynthesis; cob(II)yrinate a,c-diamide from sirohydrochlorin (anaerobic route): step 6/10. Catalyzes the methylation of C-1 in cobalt-precorrin-5B to form cobalt-precorrin-6A. The chain is Cobalt-precorrin-5B C(1)-methyltransferase from Polaromonas sp. (strain JS666 / ATCC BAA-500).